A 1099-amino-acid chain; its full sequence is Probable inorganic carbon transporter subunit DabA (1099 aa).

The interval Arg-175–Ser-194 is disordered. Residues Gln-176–Ser-194 show a composition bias toward basic residues. Cys-514, Asp-516, His-722, and Cys-737 together coordinate Zn(2+). Residues Ala-1071–Gln-1099 form a disordered region.

It belongs to the inorganic carbon transporter (TC 9.A.2) DabA family. As to quaternary structure, forms a complex with DabB. Zn(2+) serves as cofactor.

It localises to the cell membrane. Part of an energy-coupled inorganic carbon pump. In Parafrankia sp. (strain EAN1pec), this protein is Probable inorganic carbon transporter subunit DabA.